A 158-amino-acid chain; its full sequence is uncharacterized protein (158 aa).

Disordered regions lie at residues 1 to 86 and 138 to 158; these read MDFR…DHWW and ASQVGSGKAGPCTPHPSLLGF. The span at 7–76 shows a compositional bias: low complexity; that stretch reads SPTTCTTPAS…PTPASSGSAA (70 aa).

This is an uncharacterized protein from Homo sapiens (Human).